A 208-amino-acid chain; its full sequence is Guanylate kinase (208 aa).

The Guanylate kinase-like domain occupies 4–185; sequence GNLYILSAPS…ALADLVHILR (182 aa). Residue 11 to 18 participates in ATP binding; sequence APSGAGKS.

This sequence belongs to the guanylate kinase family.

Its subcellular location is the cytoplasm. The enzyme catalyses GMP + ATP = GDP + ADP. In terms of biological role, essential for recycling GMP and indirectly, cGMP. The chain is Guanylate kinase from Mannheimia succiniciproducens (strain KCTC 0769BP / MBEL55E).